Reading from the N-terminus, the 343-residue chain is MIGIVSYGSYVPKFRIRVEEIARVWGEDAKKIKDGLGVHEKSVPGMDEDAATIAVEAAREAIRRAGINPEEIGAVFVGSESHPYAVKPTATIVGEALGVGNDYFAADLEFACKAGTAGMQICYSMVKAGMIKYGLAIGADTSQARPGDALEYAAAAGGAAFIIGENPIAEVEATYSFTSDTPDFWRRDLQPYPSHGGRFTGLPAYFRHVISAAKGLMEKYGYKVEDFDYAVFHMPNAKFPVRAAKMLGFSMEHISQGLVVKAIGNTYSGSSLLGLAATLDVAEPDERILLVSFGSGAGSDAFAIRVTDAIENYPREPKVWEKIERKAYVDYAIYLKHRRKIKA.

Aspartate 28 and alanine 29 together coordinate (3S)-3-hydroxy-3-methylglutaryl-CoA. Glutamate 80 serves as the catalytic Proton donor/acceptor. Cysteine 112 lines the (3S)-3-hydroxy-3-methylglutaryl-CoA pocket. The active-site Acyl-thioester intermediate is the cysteine 112. Residue arginine 198 coordinates CoA. (3S)-3-hydroxy-3-methylglutaryl-CoA contacts are provided by threonine 200 and histidine 233. Catalysis depends on histidine 233, which acts as the Proton donor/acceptor. Lysine 238 is a CoA binding site. Residues arginine 242, asparagine 265, and serine 295 each coordinate (3S)-3-hydroxy-3-methylglutaryl-CoA.

This sequence belongs to the thiolase-like superfamily. Archaeal HMG-CoA synthase family. In terms of assembly, interacts with acetoacetyl-CoA thiolase that catalyzes the precedent step in the pathway and with a DUF35 protein. The acetoacetyl-CoA thiolase/HMG-CoA synthase complex channels the intermediate via a fused CoA-binding site, which allows for efficient coupling of the endergonic thiolase reaction with the exergonic HMGCS reaction.

It catalyses the reaction acetoacetyl-CoA + acetyl-CoA + H2O = (3S)-3-hydroxy-3-methylglutaryl-CoA + CoA + H(+). It participates in metabolic intermediate biosynthesis; (R)-mevalonate biosynthesis; (R)-mevalonate from acetyl-CoA: step 2/3. Functionally, catalyzes the condensation of acetyl-CoA with acetoacetyl-CoA to form 3-hydroxy-3-methylglutaryl-CoA (HMG-CoA). Functions in the mevalonate (MVA) pathway leading to isopentenyl diphosphate (IPP), a key precursor for the biosynthesis of isoprenoid compounds that are building blocks of archaeal membrane lipids. In Archaeoglobus fulgidus (strain ATCC 49558 / DSM 4304 / JCM 9628 / NBRC 100126 / VC-16), this protein is Hydroxymethylglutaryl-CoA synthase.